A 182-amino-acid chain; its full sequence is Crossover junction endodeoxyribonuclease RuvC (182 aa).

Catalysis depends on residues Asp-7, Glu-69, and Asp-141. Positions 7, 69, and 141 each coordinate Mg(2+).

Belongs to the RuvC family. As to quaternary structure, homodimer which binds Holliday junction (HJ) DNA. The HJ becomes 2-fold symmetrical on binding to RuvC with unstacked arms; it has a different conformation from HJ DNA in complex with RuvA. In the full resolvosome a probable DNA-RuvA(4)-RuvB(12)-RuvC(2) complex forms which resolves the HJ. Requires Mg(2+) as cofactor.

Its subcellular location is the cytoplasm. The enzyme catalyses Endonucleolytic cleavage at a junction such as a reciprocal single-stranded crossover between two homologous DNA duplexes (Holliday junction).. Its function is as follows. The RuvA-RuvB-RuvC complex processes Holliday junction (HJ) DNA during genetic recombination and DNA repair. Endonuclease that resolves HJ intermediates. Cleaves cruciform DNA by making single-stranded nicks across the HJ at symmetrical positions within the homologous arms, yielding a 5'-phosphate and a 3'-hydroxyl group; requires a central core of homology in the junction. The consensus cleavage sequence is 5'-(A/T)TT(C/G)-3'. Cleavage occurs on the 3'-side of the TT dinucleotide at the point of strand exchange. HJ branch migration catalyzed by RuvA-RuvB allows RuvC to scan DNA until it finds its consensus sequence, where it cleaves and resolves the cruciform DNA. This is Crossover junction endodeoxyribonuclease RuvC from Variovorax paradoxus (strain S110).